Reading from the N-terminus, the 95-residue chain is Co-chaperonin GroES (95 aa).

It belongs to the GroES chaperonin family. In terms of assembly, heptamer of 7 subunits arranged in a ring. Interacts with the chaperonin GroEL.

The protein resides in the cytoplasm. Together with the chaperonin GroEL, plays an essential role in assisting protein folding. The GroEL-GroES system forms a nano-cage that allows encapsulation of the non-native substrate proteins and provides a physical environment optimized to promote and accelerate protein folding. GroES binds to the apical surface of the GroEL ring, thereby capping the opening of the GroEL channel. The protein is Co-chaperonin GroES of Marinobacter nauticus (strain ATCC 700491 / DSM 11845 / VT8) (Marinobacter aquaeolei).